The sequence spans 115 residues: Aspartate 1-decarboxylase (115 aa).

The active-site Schiff-base intermediate with substrate; via pyruvic acid is the Ser25. Pyruvic acid (Ser) is present on Ser25. Thr57 contributes to the substrate binding site. The active-site Proton donor is Tyr58. 73–75 (GPA) contributes to the substrate binding site.

Belongs to the PanD family. Heterooctamer of four alpha and four beta subunits. Requires pyruvate as cofactor. In terms of processing, is synthesized initially as an inactive proenzyme, which is activated by self-cleavage at a specific serine bond to produce a beta-subunit with a hydroxyl group at its C-terminus and an alpha-subunit with a pyruvoyl group at its N-terminus.

The protein localises to the cytoplasm. It catalyses the reaction L-aspartate + H(+) = beta-alanine + CO2. It functions in the pathway cofactor biosynthesis; (R)-pantothenate biosynthesis; beta-alanine from L-aspartate: step 1/1. Catalyzes the pyruvoyl-dependent decarboxylation of aspartate to produce beta-alanine. This chain is Aspartate 1-decarboxylase, found in Cytophaga hutchinsonii (strain ATCC 33406 / DSM 1761 / CIP 103989 / NBRC 15051 / NCIMB 9469 / D465).